The primary structure comprises 518 residues: Glutamate--cysteine ligase (518 aa).

This sequence belongs to the glutamate--cysteine ligase type 1 family. Type 1 subfamily.

The enzyme catalyses L-cysteine + L-glutamate + ATP = gamma-L-glutamyl-L-cysteine + ADP + phosphate + H(+). Its pathway is sulfur metabolism; glutathione biosynthesis; glutathione from L-cysteine and L-glutamate: step 1/2. The sequence is that of Glutamate--cysteine ligase from Escherichia coli O139:H28 (strain E24377A / ETEC).